The following is a 106-amino-acid chain: MVNVPKTRKTYCKGKECRKHAQHKVTQYKAGKASLYAQGKRRYDRKQSGFGGQTKQIFHKKAKTTKKVVLRLECMSCKTKTQLALKRCKHFELGGEKKQKGQALQF.

Belongs to the eukaryotic ribosomal protein eL42 family.

The polypeptide is Large ribosomal subunit protein eL42 (RPL44) (Kluyveromyces lactis (strain ATCC 8585 / CBS 2359 / DSM 70799 / NBRC 1267 / NRRL Y-1140 / WM37) (Yeast)).